Reading from the N-terminus, the 507-residue chain is MITLTPGHLTLPQLRQIARESVQLKLDPASFAKIDAGAKAVADIAAKGEPAYGINTGFGRLASTHIPHDQLELLQKNLVLSHAVGVGEPMARSSVRLLMALKLSSLGRGHSGIRREVMDALITLFNADVLPLIPVKGSVGASGDLAPLAHMSAVLLGVGEVFIRGERASALDGLRVAGLAPLTLQAKEGLALLNGTQASTALALDNMFAIEDLYRTALVAGALSVDAAAGSVKPFDARIHELRGHQGQIDAAASYRELLEGSPINQSHRDCDKVQDPYSLRCQPQVMGACLDQMRHAADVLLVEANAVSDNPLIFPDTGEVLSGGNFHAEPVAFAADNLALAASEIGALAERRIALLIDATLSGLPPFLVKDGGVNSGFMIAHVTAAALASENKTLAHPASVDSLPTSANQEDHVSMATFAARKLADIADNTKHILAIELLAAAQGVDLRAPYHTSPKLAPVMETIRSQVAHYELDHYFAPDIAVIAKLVGERAFAKVAPFSFASEQ.

Residues 141-143 (ASG) constitute a cross-link (5-imidazolinone (Ala-Gly)). S142 is modified (2,3-didehydroalanine (Ser)).

Belongs to the PAL/histidase family. In terms of processing, contains an active site 4-methylidene-imidazol-5-one (MIO), which is formed autocatalytically by cyclization and dehydration of residues Ala-Ser-Gly.

The protein localises to the cytoplasm. It catalyses the reaction L-histidine = trans-urocanate + NH4(+). It functions in the pathway amino-acid degradation; L-histidine degradation into L-glutamate; N-formimidoyl-L-glutamate from L-histidine: step 1/3. This is Histidine ammonia-lyase from Burkholderia cenocepacia (strain ATCC BAA-245 / DSM 16553 / LMG 16656 / NCTC 13227 / J2315 / CF5610) (Burkholderia cepacia (strain J2315)).